The following is a 648-amino-acid chain: Probable potassium transport system protein Kup 1 (648 aa).

The tract at residues 1–31 (MSDAVTDADGSSAQSHAQSAGHHAVQGHGGH) is disordered. Residues 10 to 26 (GSSAQSHAQSAGHHAVQ) show a composition bias toward low complexity. The next 12 helical transmembrane spans lie at 39-59 (LAVG…LYAL), 73-93 (LLHI…IVTF), 130-150 (IILL…ITPA), 165-185 (PDMH…LFFI), 193-213 (VAAF…VLGA), 243-263 (FLAM…YADM), 275-295 (WLVF…SLLI), 317-337 (LLFI…SGAF), 364-384 (IFIP…VLVF), 394-414 (YGIA…VVLF), 421-441 (APAA…YLGA), and 446-466 (IPDG…LLTT).

This sequence belongs to the HAK/KUP transporter (TC 2.A.72) family.

It is found in the cell inner membrane. The catalysed reaction is K(+)(in) + H(+)(in) = K(+)(out) + H(+)(out). Its function is as follows. Transport of potassium into the cell. Likely operates as a K(+):H(+) symporter. The polypeptide is Probable potassium transport system protein Kup 1 (Novosphingobium aromaticivorans (strain ATCC 700278 / DSM 12444 / CCUG 56034 / CIP 105152 / NBRC 16084 / F199)).